The sequence spans 32 residues: Conotoxin sr7a (32 aa).

Intrachain disulfides connect cysteine 1–cysteine 17, cysteine 8–cysteine 21, and cysteine 16–cysteine 31. A Serine amide modification is found at serine 32.

Expressed by the venom duct.

It is found in the secreted. Functionally, elicits hyperactivity when injected intracranially into mice and produces paralysis when injected into the pedal muscle of freshwater snails, Pomacea paludosa, but it has no apparent effect after intramuscular injection into the limpet Patella opea or the freshwater fish Lebistes reticulatus. This chain is Conotoxin sr7a, found in Conus spurius (Alphabet cone).